The chain runs to 348 residues: Neutral peroxidase (348 aa).

Positions 1–20 are cleaved as a signal peptide; it reads MASFVARLTLALSFIALALA. A propeptide spanning residues 21-67 is cleaved from the precursor; it reads GYSLVQNTLSSPTHTRLNLIPTWLDSTFDSADVLSYLGFGKSSGRLS. Cystine bridges form between cysteine 71/cysteine 149, cysteine 102/cysteine 107, cysteine 156/cysteine 344, and cysteine 235/cysteine 256. The Proton acceptor role is filled by histidine 100. Ca(2+) contacts are provided by aspartate 101, valine 104, glycine 106, and aspartate 108. Asparagine 114, asparagine 118, asparagine 173, asparagine 177, and asparagine 189 each carry an N-linked (GlcNAc...) asparagine glycan. Position 198 (proline 198) interacts with substrate. An N-linked (GlcNAc...) asparagine glycan is attached at asparagine 203. Residue histidine 228 coordinates heme b. Position 229 (threonine 229) interacts with Ca(2+). Asparagine 247 and asparagine 261 each carry an N-linked (GlcNAc...) asparagine glycan. Ca(2+) is bound by residues aspartate 269, serine 271, and aspartate 276. N-linked (GlcNAc...) asparagine glycosylation is present at asparagine 300.

The protein belongs to the peroxidase family. Classical plant (class III) peroxidase subfamily. Ca(2+) serves as cofactor. It depends on heme b as a cofactor. Highly expressed in suspension cultured cells. Weak expression also found in the stems of intact plants. No expression in leaf, tuberous root and non-tuberous root.

The protein localises to the secreted. The catalysed reaction is 2 a phenolic donor + H2O2 = 2 a phenolic radical donor + 2 H2O. Removal of H(2)O(2), oxidation of toxic reductants, biosynthesis and degradation of lignin, suberization, auxin catabolism, response to environmental stresses such as wounding, pathogen attack and oxidative stress. These functions might be dependent on each isozyme/isoform in each plant tissue. In terms of biological role, may contribute to protection against cold-induced oxidative stress. This is Neutral peroxidase from Ipomoea batatas (Sweet potato).